Reading from the N-terminus, the 394-residue chain is NADH-quinone oxidoreductase subunit D 2 (394 aa).

Belongs to the complex I 49 kDa subunit family. In terms of assembly, NDH-1 is composed of 14 different subunits. Subunits NuoB, C, D, E, F, and G constitute the peripheral sector of the complex.

The protein localises to the cell membrane. The enzyme catalyses a quinone + NADH + 5 H(+)(in) = a quinol + NAD(+) + 4 H(+)(out). NDH-1 shuttles electrons from NADH, via FMN and iron-sulfur (Fe-S) centers, to quinones in the respiratory chain. The immediate electron acceptor for the enzyme in this species is believed to be a menaquinone. Couples the redox reaction to proton translocation (for every two electrons transferred, four hydrogen ions are translocated across the cytoplasmic membrane), and thus conserves the redox energy in a proton gradient. The protein is NADH-quinone oxidoreductase subunit D 2 of Streptomyces griseus subsp. griseus (strain JCM 4626 / CBS 651.72 / NBRC 13350 / KCC S-0626 / ISP 5235).